The sequence spans 263 residues: Large ribosomal subunit protein uL23m (263 aa).

A mitochondrion-targeting transit peptide spans 1 to 45 (MPRLTVGTKNMLYPLQKTLAVGSCKPEQVPIRSLASVVESSSKIL).

This sequence belongs to the universal ribosomal protein uL23 family. As to quaternary structure, component of the mitochondrial large ribosomal subunit (mt-LSU). Mature yeast 74S mitochondrial ribosomes consist of a small (37S) and a large (54S) subunit. The 37S small subunit contains a 15S ribosomal RNA (15S mt-rRNA) and 34 different proteins. The 54S large subunit contains a 21S rRNA (21S mt-rRNA) and 46 different proteins. uL23m forms the wall of the exit tunnel. Interacts with the C-terminus of OXA1.

The protein localises to the mitochondrion. Functionally, component of the mitochondrial ribosome (mitoribosome), a dedicated translation machinery responsible for the synthesis of mitochondrial genome-encoded proteins, including at least some of the essential transmembrane subunits of the mitochondrial respiratory chain. The mitoribosomes are attached to the mitochondrial inner membrane and translation products are cotranslationally integrated into the membrane. The chain is Large ribosomal subunit protein uL23m (MRP20) from Saccharomyces cerevisiae (strain ATCC 204508 / S288c) (Baker's yeast).